A 531-amino-acid chain; its full sequence is MEKRALIAVVLSILFFYGYTALFSPPPKETPKPVATATQSQPAQQVTAAPVPVAVPAQPQPAVAARDVSVDTPAYSVTFSTQGGSIKRLDLKRYHETAGPGGKNVTLVSEDNPSNYTIGLRAPGFGLDQNAVFVPSADALTVGPGEKKQLSFTWVSPAGVTVTKTYNFSGDGYGLEIQYQVTNSGSARVSSPVQTVQTYPLVPKVKESRFETFGPATFAQDKLFEDKVKDLESGAKTHAAPLWSGFADKYFLSAVLAHEGSMAAATIRKTASGYLENTISSPELSLNPGEGRALTYRLFFGPKDIDVLKAQGNSLERAINLGWFAMLAKPLLHSLKFFHNYTGNYGIAIIIITVIIKVIFYPLTHSSYKSMKEMQKLQPKMQQLREKYKNDREAMNRAMMELYQTHKVNPVGGCLPMLVQIPVFFALYKALMFSIELRHAPFMLWITDLAAKDPYYVTPIIMGVTMVIQQKMTPSQMDPVQQKMMMALPVVFTFMFLNFPSGLVLYWLVNNVLTIIQQYYINRSISTAEAK.

Helical transmembrane passes span 5–25 (ALIA…LFSP), 343–363 (GNYG…FYPL), 415–435 (LPML…MFSI), and 489–509 (PVVF…YWLV).

Belongs to the OXA1/ALB3/YidC family. Type 1 subfamily. As to quaternary structure, interacts with the Sec translocase complex via SecD. Specifically interacts with transmembrane segments of nascent integral membrane proteins during membrane integration.

It is found in the cell inner membrane. Required for the insertion and/or proper folding and/or complex formation of integral membrane proteins into the membrane. Involved in integration of membrane proteins that insert both dependently and independently of the Sec translocase complex, as well as at least some lipoproteins. Aids folding of multispanning membrane proteins. This Geobacter sulfurreducens (strain ATCC 51573 / DSM 12127 / PCA) protein is Membrane protein insertase YidC.